The sequence spans 56 residues: MAKGKGVRIVVTLECKTDQGVYRYHTTKNRRNTPNRIELKKYCPLTQQHEIFKEIK.

The protein belongs to the bacterial ribosomal protein bL33 family.

The protein resides in the plastid. Its subcellular location is the chloroplast. This is Large ribosomal subunit protein bL33c (rpl33) from Guillardia theta (Cryptophyte).